Here is a 199-residue protein sequence, read N- to C-terminus: N-(5'-phosphoribosyl)anthranilate isomerase (199 aa).

It belongs to the TrpF family.

The catalysed reaction is N-(5-phospho-beta-D-ribosyl)anthranilate = 1-(2-carboxyphenylamino)-1-deoxy-D-ribulose 5-phosphate. It participates in amino-acid biosynthesis; L-tryptophan biosynthesis; L-tryptophan from chorismate: step 3/5. This chain is N-(5'-phosphoribosyl)anthranilate isomerase, found in Sulfolobus acidocaldarius (strain ATCC 33909 / DSM 639 / JCM 8929 / NBRC 15157 / NCIMB 11770).